A 117-amino-acid polypeptide reads, in one-letter code: Thioredoxin (117 aa).

The 115-residue stretch at 2–116 (AISLTEEDFV…FENIIKDFFG (115 aa)) folds into the Thioredoxin domain. The cysteines at positions 40 and 43 are disulfide-linked.

This sequence belongs to the thioredoxin family.

Participates in various redox reactions through the reversible oxidation of its active center dithiol to a disulfide and catalyzes dithiol-disulfide exchange reactions. This chain is Thioredoxin (trxA), found in Borreliella burgdorferi (strain ATCC 35210 / DSM 4680 / CIP 102532 / B31) (Borrelia burgdorferi).